The chain runs to 218 residues: Cytidylate kinase (218 aa).

Residue 7–15 (GPSASGKSS) coordinates ATP.

The protein belongs to the cytidylate kinase family. Type 1 subfamily.

It localises to the cytoplasm. It catalyses the reaction CMP + ATP = CDP + ADP. It carries out the reaction dCMP + ATP = dCDP + ADP. The sequence is that of Cytidylate kinase from Borrelia duttonii (strain Ly).